A 635-amino-acid chain; its full sequence is Nuclear distribution protein nudE homolog 1 (635 aa).

A coiled-coil region spans residues 14-192 (EKEIKHWKSK…TILRDLVTRS (179 aa)). Disordered regions lie at residues 35-63 (ESSL…NKTI), 200-267 (TMAS…LSRD), 279-328 (VLDD…SARA), 389-504 (SRVV…DHDP), and 516-635 (AAQA…TETF). Basic and acidic residues predominate over residues 43–56 (ESSKELEQEMEKEL). Composition is skewed to polar residues over residues 201 to 224 (MASS…SPIK) and 237 to 246 (SRQALSSPVT). A compositionally biased stretch (low complexity) spans 280-299 (LDDSPTATTTSAAPTRSSTL). Composition is skewed to polar residues over residues 314 to 326 (ASTS…SPSA) and 411 to 428 (GSPS…TSTP). Residues 516–541 (AAQASVAKRRTSMSGSGMSHSASHGS) show a composition bias toward low complexity. 2 stretches are compositionally biased toward polar residues: residues 547 to 571 (SGST…SSMT) and 580 to 619 (SKRT…PAQT). A compositionally biased stretch (low complexity) spans 620 to 635 (LSRSRSSSLGSETETF).

It belongs to the nudE family. Self-associates. Interacts with PAC1.

It is found in the cytoplasm. The protein localises to the cytoskeleton. Required for nuclear migration. This chain is Nuclear distribution protein nudE homolog 1 (NDE1), found in Mycosarcoma maydis (Corn smut fungus).